Here is a 66-residue protein sequence, read N- to C-terminus: DNA-directed RNA polymerase subunit omega (66 aa).

It belongs to the RNA polymerase subunit omega family. In terms of assembly, the RNAP catalytic core consists of 2 alpha, 1 beta, 1 beta' and 1 omega subunit. When a sigma factor is associated with the core the holoenzyme is formed, which can initiate transcription.

It catalyses the reaction RNA(n) + a ribonucleoside 5'-triphosphate = RNA(n+1) + diphosphate. Its function is as follows. Promotes RNA polymerase assembly. Latches the N- and C-terminal regions of the beta' subunit thereby facilitating its interaction with the beta and alpha subunits. This Geobacillus kaustophilus (strain HTA426) protein is DNA-directed RNA polymerase subunit omega.